The chain runs to 147 residues: Leghemoglobin (147 aa).

Residues 2 to 147 enclose the Globin domain; that stretch reads GFTADQEALV…LASAIKKAMS (146 aa). A nitrated tyrosine mark is found at tyrosine 25 and tyrosine 30. Residue serine 45 participates in heme b binding. Serine 45 is modified (phosphoserine). Histidine 62 contacts O2. Heme b contacts are provided by lysine 65, histidine 94, and lysine 97. Tyrosine 135 is modified (nitrated tyrosine).

This sequence belongs to the plant globin family. Monomer. In terms of processing, nitrated in effective nodules and particularly in hypoxic conditions; this mechanism may play a protective role in the symbiosis by buffering toxic peroxynitrite NO(2)(-). Nitration level decrease during nodule senescence. Post-translationally, phosphorylation at Ser-45 disrupts the molecular environment of its porphyrin ring oxygen binding pocket, thus leading to a reduced oxygen consumption and to the delivery of oxygen O(2) to symbiosomes. Root nodules.

It localises to the cytoplasm. Its subcellular location is the cytosol. The protein localises to the nucleus. Functionally, leghemoglobin that reversibly binds oxygen O(2) through a pentacoordinated heme iron. In root nodules, facilitates the diffusion of oxygen to the bacteroids while preventing the bacterial nitrogenase from being inactivated by buffering dioxygen, nitric oxide and carbon monoxide, and promoting the formation of reactive oxygen species (ROS, e.g. H(2)O(2)). This role is essential for symbiotic nitrogen fixation (SNF). This chain is Leghemoglobin (LB3), found in Medicago sativa (Alfalfa).